A 240-amino-acid polypeptide reads, in one-letter code: 2,3,4,5-tetrahydropyridine-2,6-dicarboxylate N-acetyltransferase (240 aa).

Belongs to the transferase hexapeptide repeat family. DapH subfamily.

It catalyses the reaction (S)-2,3,4,5-tetrahydrodipicolinate + acetyl-CoA + H2O = L-2-acetamido-6-oxoheptanedioate + CoA. It participates in amino-acid biosynthesis; L-lysine biosynthesis via DAP pathway; LL-2,6-diaminopimelate from (S)-tetrahydrodipicolinate (acetylase route): step 1/3. Its function is as follows. Catalyzes the transfer of an acetyl group from acetyl-CoA to tetrahydrodipicolinate. In Bacillus cereus (strain G9842), this protein is 2,3,4,5-tetrahydropyridine-2,6-dicarboxylate N-acetyltransferase.